Reading from the N-terminus, the 130-residue chain is Small ribosomal subunit protein uS9 (130 aa).

This sequence belongs to the universal ribosomal protein uS9 family.

This is Small ribosomal subunit protein uS9 from Chromobacterium violaceum (strain ATCC 12472 / DSM 30191 / JCM 1249 / CCUG 213 / NBRC 12614 / NCIMB 9131 / NCTC 9757 / MK).